The following is a 155-amino-acid chain: V-type proton ATPase 16 kDa proteolipid subunit c (155 aa).

Topologically, residues 1-10 (MSEAKNGPEY) are lumenal. A helical transmembrane segment spans residues 11-33 (ASFFAVMGASAAMVFSALGAAYG). Topologically, residues 34–55 (TAKSGTGIAAMSVMRPEMIMKS) are cytoplasmic. The helical transmembrane segment at 56 to 76 (IIPVVMAGIIAIYGLVVAVLI) threads the bilayer. At 77 to 92 (ANSLNDGISLYRSFLQ) the chain is on the lumenal side. A helical membrane pass occupies residues 93–114 (LGAGLSVGLSGLAAGFAIGIVG). Over 115-131 (DAGVRGTAQQPRLFVGM) the chain is Cytoplasmic. Residues 132-152 (ILILIFAEVLGLYGLIVALIL) form a helical membrane-spanning segment. Residues 153-155 (STK) lie on the Lumenal side of the membrane.

The protein belongs to the V-ATPase proteolipid subunit family. V-ATPase is a heteromultimeric enzyme made up of two complexes: the ATP-hydrolytic V1 complex and the proton translocation V0 complex. The V1 complex consists of three catalytic AB heterodimers that form a heterohexamer, three peripheral stalks each consisting of EG heterodimers, one central rotor including subunits D and F, and the regulatory subunits C and H. The proton translocation complex V0 consists of the proton transport subunit a, a ring of proteolipid subunits c9c'', rotary subunit d, subunits e and f, and the accessory subunits ATP6AP1/Ac45 and ATP6AP2/PRR. Interacts with the V0 complex V-ATPase subunit a4 ATP6V0A4. Interacts with LASS2. Interacts with RNF182; this interaction leads to ubiquitination and degradation via the proteasome pathway. In terms of processing, ubiquitinated by RNF182, leading to its degradation via the ubiquitin-proteasome pathway. Expressed in brain (at protein level).

It localises to the cytoplasmic vesicle. Its subcellular location is the clathrin-coated vesicle membrane. The protein resides in the secretory vesicle. The protein localises to the synaptic vesicle membrane. In terms of biological role, proton-conducting pore forming subunit of the V0 complex of vacuolar(H+)-ATPase (V-ATPase), a multisubunit enzyme composed of a peripheral complex (V1) that hydrolyzes ATP and a membrane integral complex (V0) that translocates protons. V-ATPase is responsible for acidifying and maintaining the pH of intracellular compartments and in some cell types, is targeted to the plasma membrane, where it is responsible for acidifying the extracellular environment. This Bos taurus (Bovine) protein is V-type proton ATPase 16 kDa proteolipid subunit c (ATP6V0C).